Here is a 250-residue protein sequence, read N- to C-terminus: 5-oxoprolinase subunit A (250 aa).

It belongs to the LamB/PxpA family. As to quaternary structure, forms a complex composed of PxpA, PxpB and PxpC.

It catalyses the reaction 5-oxo-L-proline + ATP + 2 H2O = L-glutamate + ADP + phosphate + H(+). In terms of biological role, catalyzes the cleavage of 5-oxoproline to form L-glutamate coupled to the hydrolysis of ATP to ADP and inorganic phosphate. The polypeptide is 5-oxoprolinase subunit A (Thermus thermophilus (strain ATCC 27634 / DSM 579 / HB8)).